A 327-amino-acid polypeptide reads, in one-letter code: Phospho-N-acetylmuramoyl-pentapeptide-transferase (327 aa).

The next 10 membrane-spanning stretches (helical) occupy residues threonine 3 to isoleucine 23, threonine 51 to phenylalanine 71, valine 79 to leucine 99, leucine 115 to glycine 135, valine 140 to valine 160, isoleucine 172 to leucine 192, phenylalanine 197 to asparagine 217, isoleucine 223 to alanine 243, tryptophan 248 to valine 268, and valine 306 to tyrosine 326.

Belongs to the glycosyltransferase 4 family. MraY subfamily. Requires Mg(2+) as cofactor.

The protein localises to the cell membrane. It catalyses the reaction UDP-N-acetyl-alpha-D-muramoyl-L-alanyl-gamma-D-glutamyl-L-lysyl-D-alanyl-D-alanine + di-trans,octa-cis-undecaprenyl phosphate = Mur2Ac(oyl-L-Ala-gamma-D-Glu-L-Lys-D-Ala-D-Ala)-di-trans,octa-cis-undecaprenyl diphosphate + UMP. Its pathway is cell wall biogenesis; peptidoglycan biosynthesis. Catalyzes the initial step of the lipid cycle reactions in the biosynthesis of the cell wall peptidoglycan: transfers peptidoglycan precursor phospho-MurNAc-pentapeptide from UDP-MurNAc-pentapeptide onto the lipid carrier undecaprenyl phosphate, yielding undecaprenyl-pyrophosphoryl-MurNAc-pentapeptide, known as lipid I. In Streptococcus gordonii (strain Challis / ATCC 35105 / BCRC 15272 / CH1 / DL1 / V288), this protein is Phospho-N-acetylmuramoyl-pentapeptide-transferase.